We begin with the raw amino-acid sequence, 327 residues long: Tyrosine--tRNA ligase (327 aa).

Tyrosine 33 contacts L-tyrosine. The 'HIGH' region signature appears at 38–46 (PSGVLHLGH). The L-tyrosine site is built by tyrosine 154, glutamine 158, aspartate 161, and glutamine 176. The 'KMSKS' region motif lies at 212 to 216 (KMSSS). Serine 215 is a binding site for ATP.

The protein belongs to the class-I aminoacyl-tRNA synthetase family. TyrS type 3 subfamily. In terms of assembly, homodimer.

The protein resides in the cytoplasm. It carries out the reaction tRNA(Tyr) + L-tyrosine + ATP = L-tyrosyl-tRNA(Tyr) + AMP + diphosphate + H(+). Its function is as follows. Catalyzes the attachment of tyrosine to tRNA(Tyr) in a two-step reaction: tyrosine is first activated by ATP to form Tyr-AMP and then transferred to the acceptor end of tRNA(Tyr). This is Tyrosine--tRNA ligase from Halobacterium salinarum (strain ATCC 29341 / DSM 671 / R1).